The primary structure comprises 416 residues: UDP-N-acetylglucosamine 1-carboxyvinyltransferase (416 aa).

22–23 is a binding site for phosphoenolpyruvate; the sequence is KN. Arg91 provides a ligand contact to UDP-N-acetyl-alpha-D-glucosamine. The active-site Proton donor is Cys115. Cys115 is modified (2-(S-cysteinyl)pyruvic acid O-phosphothioketal). UDP-N-acetyl-alpha-D-glucosamine contacts are provided by residues 120–124, Asp305, and Ile327; that span reads RPIDL.

The protein belongs to the EPSP synthase family. MurA subfamily.

It localises to the cytoplasm. It catalyses the reaction phosphoenolpyruvate + UDP-N-acetyl-alpha-D-glucosamine = UDP-N-acetyl-3-O-(1-carboxyvinyl)-alpha-D-glucosamine + phosphate. It functions in the pathway cell wall biogenesis; peptidoglycan biosynthesis. In terms of biological role, cell wall formation. Adds enolpyruvyl to UDP-N-acetylglucosamine. This Buchnera aphidicola subsp. Acyrthosiphon pisum (strain Tuc7) protein is UDP-N-acetylglucosamine 1-carboxyvinyltransferase.